The following is a 209-amino-acid chain: Methylthioribulose-1-phosphate dehydratase (209 aa).

The Zn(2+) site is built by His-99 and His-101.

The protein belongs to the aldolase class II family. MtnB subfamily. Requires Zn(2+) as cofactor.

It catalyses the reaction 5-(methylsulfanyl)-D-ribulose 1-phosphate = 5-methylsulfanyl-2,3-dioxopentyl phosphate + H2O. It participates in amino-acid biosynthesis; L-methionine biosynthesis via salvage pathway; L-methionine from S-methyl-5-thio-alpha-D-ribose 1-phosphate: step 2/6. In terms of biological role, catalyzes the dehydration of methylthioribulose-1-phosphate (MTRu-1-P) into 2,3-diketo-5-methylthiopentyl-1-phosphate (DK-MTP-1-P). The protein is Methylthioribulose-1-phosphate dehydratase of Leptospira biflexa serovar Patoc (strain Patoc 1 / Ames).